A 604-amino-acid chain; its full sequence is MCGIVGVVGNTNATDILIQGLEKLEYRGYDSAGIFVVGDNKSQLVKSVGRIAELQAKVGDSVSGTTGIGHTRWATHGKPTEGNAHPHTSGSGRFVLVHNGVIENYLQIKETYLTKHNLKGETDTEIAIHLVEHFVEEDNLSVLEAFKKALHIIEGSYAFALIDSQDADTIYVAKNKSPLLIGLGNGYNMVCSDAMAMIRETSEYMEIHDKELVIVKKDSVEVQDYDGNVIERGSYTAELDLSDIGKGTYPFYMLKEIDEQPTVMRKLISTYANESGDMNVDSDIIKSVQEADRLYILAAGTSYHAGFAAKTMIEKLTDTPVELGVSSEWGYNMPLLSKKPMFILLSQSGETADSRQVLVKANEMGIPSLTITNVPGSTLSREATYTMLIHAGPEIAVASTKAYTAQVATLAFLAKAVGEANGKAEAKDFDLVHELSIVAQSIEATLSEKDVISEKVEQLLISTRNAFYIGRGNDYYVTMEAALKLKEISYIQTEGFAAGELKHGTISLIEDNTPVIALISADSTIAAHTRGNIQEVVSRGANALIIVEEGLEREGDDIIVNKVHPFLSAISMVIPTQLIAYYASLQRGLDVDKPRNLAKAVTVE.

Cysteine 2 functions as the Nucleophile; for GATase activity in the catalytic mechanism. Residues 2–218 enclose the Glutamine amidotransferase type-2 domain; it reads CGIVGVVGNT…DKELVIVKKD (217 aa). 2 SIS domains span residues 284–423 and 456–594; these read IIKS…ANGK and VEQL…VDKP. The For Fru-6P isomerization activity role is filled by lysine 599.

In terms of assembly, homodimer.

Its subcellular location is the cytoplasm. It catalyses the reaction D-fructose 6-phosphate + L-glutamine = D-glucosamine 6-phosphate + L-glutamate. Functionally, catalyzes the first step in hexosamine metabolism, converting fructose-6P into glucosamine-6P using glutamine as a nitrogen source. This is Glutamine--fructose-6-phosphate aminotransferase [isomerizing] from Streptococcus agalactiae serotype III (strain NEM316).